Consider the following 196-residue polypeptide: Secreted phosphoprotein 24 (196 aa).

The N-terminal stretch at 1-19 is a signal peptide; the sequence is MKWCGVLMVALLQSLCCSG. Cystine bridges form between Cys83/Cys94 and Cys107/Cys125. Residues 125-196 form a disordered region; it reads CGQDSSSSES…RGDSFGNHLE (72 aa). Low complexity predominate over residues 129–138; sequence SSSSESSSEE.

This sequence belongs to the SPP2 family. Multiply phosphorylated at serine residues.

The protein localises to the secreted. Could coordinate an aspect of bone turnover. In Salmo salar (Atlantic salmon), this protein is Secreted phosphoprotein 24 (spp2).